A 161-amino-acid chain; its full sequence is NAD(P)H-quinone oxidoreductase subunit I, chloroplastic (161 aa).

4Fe-4S ferredoxin-type domains are found at residues 55–84 and 95–124; these read GRIH…VDWK and LNYS…MTEE. 8 residues coordinate [4Fe-4S] cluster: C64, C67, C70, C74, C104, C107, C110, and C114.

This sequence belongs to the complex I 23 kDa subunit family. NDH is composed of at least 16 different subunits, 5 of which are encoded in the nucleus. [4Fe-4S] cluster is required as a cofactor.

The protein localises to the plastid. It is found in the chloroplast thylakoid membrane. It catalyses the reaction a plastoquinone + NADH + (n+1) H(+)(in) = a plastoquinol + NAD(+) + n H(+)(out). The catalysed reaction is a plastoquinone + NADPH + (n+1) H(+)(in) = a plastoquinol + NADP(+) + n H(+)(out). Its function is as follows. NDH shuttles electrons from NAD(P)H:plastoquinone, via FMN and iron-sulfur (Fe-S) centers, to quinones in the photosynthetic chain and possibly in a chloroplast respiratory chain. The immediate electron acceptor for the enzyme in this species is believed to be plastoquinone. Couples the redox reaction to proton translocation, and thus conserves the redox energy in a proton gradient. This chain is NAD(P)H-quinone oxidoreductase subunit I, chloroplastic, found in Phaseolus vulgaris (Kidney bean).